A 177-amino-acid chain; its full sequence is Early nodulin-like protein 15 (177 aa).

The signal sequence occupies residues 1-24 (MASSSLLVTIFLCISVFFFSSVNA). A Phytocyanin domain is found at 25-129 (NEVTVGGKSG…GQKLRLVVIT (105 aa)). An intrachain disulfide couples C83 to C117. N84 is a glycosylation site (N-linked (GlcNAc...) asparagine). S153 carries GPI-anchor amidated serine lipidation. The propeptide at 154–177 (GAAKLAGGFSVVFGLVLGLWAFFF) is removed in mature form.

Belongs to the early nodulin-like (ENODL) family. Mostly expressed in seedlings, siliques and flowers, and, to a lower extent, in roots, stems and seeds, but barely in leaves.

The protein localises to the cell membrane. In terms of biological role, may act as a carbohydrate transporter. Required, together with ENODL11, ENODL12, ENODL13, ENODL14 and ENODL15, for male-female communication and pollen tube reception and burst at the synergid cell surface of the female gametophyte. In Arabidopsis thaliana (Mouse-ear cress), this protein is Early nodulin-like protein 15.